Reading from the N-terminus, the 308-residue chain is Phosphoribosylaminoimidazole-succinocarboxamide synthase (308 aa).

The protein belongs to the SAICAR synthetase family.

It carries out the reaction 5-amino-1-(5-phospho-D-ribosyl)imidazole-4-carboxylate + L-aspartate + ATP = (2S)-2-[5-amino-1-(5-phospho-beta-D-ribosyl)imidazole-4-carboxamido]succinate + ADP + phosphate + 2 H(+). The protein operates within purine metabolism; IMP biosynthesis via de novo pathway; 5-amino-1-(5-phospho-D-ribosyl)imidazole-4-carboxamide from 5-amino-1-(5-phospho-D-ribosyl)imidazole-4-carboxylate: step 1/2. This is Phosphoribosylaminoimidazole-succinocarboxamide synthase from Stenotrophomonas maltophilia (strain R551-3).